Reading from the N-terminus, the 447-residue chain is tRNA-2-methylthio-N(6)-dimethylallyladenosine synthase (447 aa).

The 116-residue stretch at M1–A116 folds into the MTTase N-terminal domain. [4Fe-4S] cluster-binding residues include C8, C45, C79, C153, C157, and C160. The region spanning R139 to A372 is the Radical SAM core domain. The region spanning Q375–G438 is the TRAM domain.

The protein belongs to the methylthiotransferase family. MiaB subfamily. As to quaternary structure, monomer. [4Fe-4S] cluster serves as cofactor.

It is found in the cytoplasm. It catalyses the reaction N(6)-dimethylallyladenosine(37) in tRNA + (sulfur carrier)-SH + AH2 + 2 S-adenosyl-L-methionine = 2-methylsulfanyl-N(6)-dimethylallyladenosine(37) in tRNA + (sulfur carrier)-H + 5'-deoxyadenosine + L-methionine + A + S-adenosyl-L-homocysteine + 2 H(+). In terms of biological role, catalyzes the methylthiolation of N6-(dimethylallyl)adenosine (i(6)A), leading to the formation of 2-methylthio-N6-(dimethylallyl)adenosine (ms(2)i(6)A) at position 37 in tRNAs that read codons beginning with uridine. In Bordetella pertussis (strain Tohama I / ATCC BAA-589 / NCTC 13251), this protein is tRNA-2-methylthio-N(6)-dimethylallyladenosine synthase.